The following is a 200-amino-acid chain: MAKIELKPVGTNLLKSVSGESVELQSLWRDKPVVLFFLRRFGCQVCRWTAAEISKLEPDLTAHGIALVGIGPEETGLKEFKEGGFFKGDLYIDEKKQCYKDLGFKRYTALSVVPAALGKKIREVTTKAKAQGIQGNFTGDLLQSGGMLIVAKGGEKVLLHFVQDSPGDYVPLEDISKALDISANVQAGERPQCNDDVCTR.

The protein belongs to the peroxiredoxin-like PRXL2 family. Prostamide/prostaglandin F synthase subfamily.

Its subcellular location is the cytoplasm. It is found in the cytosol. The enzyme catalyses prostaglandin H2 + [thioredoxin]-dithiol = prostaglandin F2alpha + [thioredoxin]-disulfide. It carries out the reaction prostamide F2alpha + [thioredoxin]-disulfide = prostamide H2 + [thioredoxin]-dithiol. In terms of biological role, catalyzes the reduction of prostaglandin-ethanolamide H(2) (prostamide H(2)) to prostamide F(2alpha) with NADPH as proton donor. Also able to reduce prostaglandin H(2) to prostaglandin F(2alpha). This chain is Prostamide/prostaglandin F synthase (prxl2b), found in Salmo salar (Atlantic salmon).